The sequence spans 210 residues: Protein GrpE (210 aa).

The tract at residues 191–210 is disordered; sequence KGGPKPAEAETNSVFDEKDA.

Belongs to the GrpE family. In terms of assembly, homodimer.

The protein localises to the cytoplasm. Its function is as follows. Participates actively in the response to hyperosmotic and heat shock by preventing the aggregation of stress-denatured proteins, in association with DnaK and GrpE. It is the nucleotide exchange factor for DnaK and may function as a thermosensor. Unfolded proteins bind initially to DnaJ; upon interaction with the DnaJ-bound protein, DnaK hydrolyzes its bound ATP, resulting in the formation of a stable complex. GrpE releases ADP from DnaK; ATP binding to DnaK triggers the release of the substrate protein, thus completing the reaction cycle. Several rounds of ATP-dependent interactions between DnaJ, DnaK and GrpE are required for fully efficient folding. The polypeptide is Protein GrpE (Rhizobium etli (strain CIAT 652)).